The primary structure comprises 538 residues: Cytochrome c-552 (538 aa).

An N-terminal signal peptide occupies residues 1–55 (MKIYLRFVWILIIILNFLLNLFITTNGVIIVNAFKKSLIVAASFASLSLFNSATA). A heme c-binding site is contributed by His-133. Residues Cys-161, Cys-164, and Lys-165 each contribute to the heme site. Heme c-binding residues include Cys-199, Cys-202, His-203, Cys-264, Cys-267, and His-268. Ca(2+)-binding residues include Glu-270, Tyr-271, Lys-316, and Gln-318. Tyr-271 provides a ligand contact to substrate. His-319 is a substrate binding site. Residues His-330, Cys-337, Cys-340, His-341, His-356, Cys-369, Cys-372, His-373, and His-448 each coordinate heme c.

The protein belongs to the cytochrome c-552 family. Requires Ca(2+) as cofactor. Heme c serves as cofactor.

The protein localises to the periplasm. The enzyme catalyses 6 Fe(III)-[cytochrome c] + NH4(+) + 2 H2O = 6 Fe(II)-[cytochrome c] + nitrite + 8 H(+). It participates in nitrogen metabolism; nitrate reduction (assimilation). Its function is as follows. Catalyzes the reduction of nitrite to ammonia, consuming six electrons in the process. This chain is Cytochrome c-552, found in Haemophilus influenzae (strain 86-028NP).